The primary structure comprises 137 residues: Small ribosomal subunit protein bS16m (137 aa).

Residues 1–34 (MVHLTTLLCKAYRGGHLTIRLALGGCTNRPFYRI) constitute a mitochondrion transit peptide. Thr-130 carries the phosphothreonine modification.

This sequence belongs to the bacterial ribosomal protein bS16 family. Component of the mitochondrial small ribosomal subunit (mt-SSU). Mature mammalian 55S mitochondrial ribosomes consist of a small (28S) and a large (39S) subunit. The 28S small subunit contains a 12S ribosomal RNA (12S mt-rRNA) and 30 different proteins. The 39S large subunit contains a 16S rRNA (16S mt-rRNA), a copy of mitochondrial valine transfer RNA (mt-tRNA(Val)), which plays an integral structural role, and 52 different proteins. bS16m has a zinc binding site.

It is found in the mitochondrion. This is Small ribosomal subunit protein bS16m (MRPS16) from Homo sapiens (Human).